Reading from the N-terminus, the 357-residue chain is A-type ATP synthase subunit C (357 aa).

The protein belongs to the V-ATPase V0D/AC39 subunit family. As to quaternary structure, has multiple subunits with at least A(3), B(3), C, D, E, F, H, I and proteolipid K(x).

The protein localises to the cell membrane. Functionally, component of the A-type ATP synthase that produces ATP from ADP in the presence of a proton gradient across the membrane. The polypeptide is A-type ATP synthase subunit C (Methanococcoides burtonii (strain DSM 6242 / NBRC 107633 / OCM 468 / ACE-M)).